We begin with the raw amino-acid sequence, 456 residues long: 26S proteasome non-ATPase regulatory subunit 12 (456 aa).

Residue Ala2 is modified to N-acetylalanine. A Glycyl lysine isopeptide (Lys-Gly) (interchain with G-Cter in SUMO1); alternate cross-link involves residue Lys92. Lys92 is covalently cross-linked (Glycyl lysine isopeptide (Lys-Gly) (interchain with G-Cter in SUMO2); alternate). 2 positions are modified to N6-acetyllysine: Lys221 and Lys368. Residues 242–420 (SICKHYRAIY…GIINFQRPKD (179 aa)) enclose the PCI domain.

Belongs to the proteasome subunit p55 family. In terms of assembly, component of the 19S proteasome regulatory particle complex. The 26S proteasome consists of a 20S core particle (CP) and two 19S regulatory subunits (RP). The regulatory particle is made of a lid composed of 9 subunits including PSMD12, a base containing 6 ATPases and few additional components. Interacts with ERCC6.

Component of the 26S proteasome, a multiprotein complex involved in the ATP-dependent degradation of ubiquitinated proteins. This complex plays a key role in the maintenance of protein homeostasis by removing misfolded or damaged proteins, which could impair cellular functions, and by removing proteins whose functions are no longer required. Therefore, the proteasome participates in numerous cellular processes, including cell cycle progression, apoptosis, or DNA damage repair. This chain is 26S proteasome non-ATPase regulatory subunit 12 (PSMD12), found in Homo sapiens (Human).